Consider the following 195-residue polypeptide: Putative 3-methyladenine DNA glycosylase (195 aa).

Belongs to the DNA glycosylase MPG family.

In Synechococcus sp. (strain JA-3-3Ab) (Cyanobacteria bacterium Yellowstone A-Prime), this protein is Putative 3-methyladenine DNA glycosylase.